The primary structure comprises 202 residues: Small ribosomal subunit protein uS4 (202 aa).

The segment at 15-42 (LGDLPGLTRKAAKRSYPPGQHGQARRKR) is disordered. One can recognise an S4 RNA-binding domain in the interval 90 to 152 (NRLDNVCFRL…KCSKQLAEGN (63 aa)).

Belongs to the universal ribosomal protein uS4 family. As to quaternary structure, part of the 30S ribosomal subunit. Contacts protein S5. The interaction surface between S4 and S5 is involved in control of translational fidelity.

One of the primary rRNA binding proteins, it binds directly to 16S rRNA where it nucleates assembly of the body of the 30S subunit. Functionally, with S5 and S12 plays an important role in translational accuracy. The protein is Small ribosomal subunit protein uS4 of Parasynechococcus marenigrum (strain WH8102).